The primary structure comprises 61 residues: MAKKSMVAKSKRPAKFSTQAYTRCEKCGRPHSVYRKFKLCRVCFRELAYKGQIPGVTKASW.

Residues Cys-24, Cys-27, Cys-40, and Cys-43 each coordinate Zn(2+).

It belongs to the universal ribosomal protein uS14 family. Zinc-binding uS14 subfamily. Part of the 30S ribosomal subunit. Contacts proteins S3 and S10. It depends on Zn(2+) as a cofactor.

Functionally, binds 16S rRNA, required for the assembly of 30S particles and may also be responsible for determining the conformation of the 16S rRNA at the A site. This chain is Small ribosomal subunit protein uS14, found in Streptococcus mutans serotype c (strain ATCC 700610 / UA159).